We begin with the raw amino-acid sequence, 419 residues long: Tol-Pal system protein TolB (419 aa).

A signal peptide spans 1–19; sequence MFNRIISLFLLLFTGQVIA.

This sequence belongs to the TolB family. As to quaternary structure, the Tol-Pal system is composed of five core proteins: the inner membrane proteins TolA, TolQ and TolR, the periplasmic protein TolB and the outer membrane protein Pal. They form a network linking the inner and outer membranes and the peptidoglycan layer.

Its subcellular location is the periplasm. In terms of biological role, part of the Tol-Pal system, which plays a role in outer membrane invagination during cell division and is important for maintaining outer membrane integrity. The sequence is that of Tol-Pal system protein TolB from Legionella pneumophila subsp. pneumophila (strain Philadelphia 1 / ATCC 33152 / DSM 7513).